The following is a 261-amino-acid chain: tRNA 5-carboxymethoxyuridine methyltransferase (261 aa).

Residues R26, 52–53, D73, 102–103, and H119 each bind S-adenosyl-L-methionine; these read GG and AQ.

It belongs to the class I-like SAM-binding methyltransferase superfamily. CmoM family. As to quaternary structure, homodimer.

The enzyme catalyses 5-carboxymethoxyuridine(34) in tRNA + S-adenosyl-L-methionine = 5-methoxycarbonylmethoxyuridine(34) in tRNA + S-adenosyl-L-homocysteine. Its function is as follows. Catalyzes the methylation of 5-carboxymethoxyuridine (cmo5U) to form 5-methoxycarbonylmethoxyuridine (mcmo5U) at position 34 in tRNAs. This chain is tRNA 5-carboxymethoxyuridine methyltransferase, found in Escherichia coli O157:H7.